Reading from the N-terminus, the 1417-residue chain is Cytoadherence-linked asexual protein 3.1 (1417 aa).

Positions 1-24 (MVSFFKTPIFILIIFLYLNEKVIC) are cleaved as a signal peptide. Cystine bridges form between Cys-333–Cys-361, Cys-407–Cys-413, Cys-517–Cys-545, and Cys-521–Cys-542. The helical transmembrane segment at 1204–1224 (LVNGFMYAFCFFAISQMYAYF) threads the bilayer. A disordered region spans residues 1383–1417 (TYIDTEKMNEADSADSDDEKDSDTPDDELMISRFH). Over residues 1394 to 1411 (DSADSDDEKDSDTPDDEL) the composition is skewed to acidic residues.

In terms of assembly, self-associates. Component of the RhopH complex. RhopH complex is at least composed of CLAG3.1/CLAG3.2, RhopH2 and RhopH3 with a 1:1:1 subunit stoichiometry. CLAG3.1/CLAG3.2 mediates subunit association through independent contacts with RhopH2 and RhopH3, which do not directly interact with one another. Interacts with RhopH2. Interacts with RhopH3.

The protein localises to the host cell membrane. The protein resides in the host cytoplasm. Its subcellular location is the cytoplasmic vesicle. It localises to the secretory vesicle. It is found in the rhoptry. Its function is as follows. Participates in the formation of new permeability pathways in Plasmodium-infected erythrocytes enabling the uptake of nutrients from the blood plasma. The chain is Cytoadherence-linked asexual protein 3.1 from Plasmodium falciparum (isolate 3D7).